The chain runs to 64 residues: Large ribosomal subunit protein bL28 (64 aa).

Positions 1–26 (MARRDQLTGKGPLSGNTRSHAMNHSK) are disordered.

It belongs to the bacterial ribosomal protein bL28 family.

The sequence is that of Large ribosomal subunit protein bL28 from Ureaplasma urealyticum serovar 10 (strain ATCC 33699 / Western).